A 313-amino-acid polypeptide reads, in one-letter code: Solute carrier family 35 member E3 (313 aa).

Transmembrane regions (helical) follow at residues 14–34, 40–60, 77–97, 100–122, 130–146, 153–173, 187–207, 215–235, 252–272, and 275–295; these read IIAG…INKW, GFPN…GLFI, ILLL…SLQS, IGTY…TMYY, IKLT…LNSY, LMGM…QVWV, LLYY…PFFE, IFGP…VIAF, TYNM…YVLF, and PLSL…LAYT.

This sequence belongs to the TPT transporter family. SLC35E subfamily.

Its subcellular location is the membrane. Its function is as follows. Putative transporter. This Danio rerio (Zebrafish) protein is Solute carrier family 35 member E3 (slc35e3).